A 527-amino-acid chain; its full sequence is Glutamate--cysteine ligase (527 aa).

This sequence belongs to the glutamate--cysteine ligase type 1 family. Type 1 subfamily.

The enzyme catalyses L-cysteine + L-glutamate + ATP = gamma-L-glutamyl-L-cysteine + ADP + phosphate + H(+). Its pathway is sulfur metabolism; glutathione biosynthesis; glutathione from L-cysteine and L-glutamate: step 1/2. This is Glutamate--cysteine ligase from Bordetella petrii (strain ATCC BAA-461 / DSM 12804 / CCUG 43448).